A 342-amino-acid chain; its full sequence is Flagellar P-ring protein (342 aa).

An N-terminal signal peptide occupies residues 1 to 19; sequence MKRVFLWLIFVLAFHKLLA.

The protein belongs to the FlgI family. In terms of assembly, the basal body constitutes a major portion of the flagellar organelle and consists of four rings (L,P,S, and M) mounted on a central rod.

The protein resides in the periplasm. The protein localises to the bacterial flagellum basal body. Its function is as follows. Assembles around the rod to form the L-ring and probably protects the motor/basal body from shearing forces during rotation. This is Flagellar P-ring protein from Helicobacter pylori (strain P12).